A 67-amino-acid chain; its full sequence is Large ribosomal subunit protein bL35 (67 aa).

It belongs to the bacterial ribosomal protein bL35 family.

The chain is Large ribosomal subunit protein bL35 from Rhizobium etli (strain ATCC 51251 / DSM 11541 / JCM 21823 / NBRC 15573 / CFN 42).